The primary structure comprises 299 residues: GTPase Era (299 aa).

One can recognise an Era-type G domain in the interval 4-171; sequence KSGFVAILGR…VDILSENLDE (168 aa). The segment at 12-19 is G1; that stretch reads GRPNVGKS. 12-19 contacts GTP; sequence GRPNVGKS. A G2 region spans residues 38–42; it reads QTTRN. The segment at 59-62 is G3; the sequence is DTPG. GTP contacts are provided by residues 59 to 63 and 121 to 124; these read DTPGI and NKID. The tract at residues 121-124 is G4; that stretch reads NKID. Residues 150 to 152 form a G5 region; the sequence is ISA. Residues 202 to 280 form the KH type-2 domain; the sequence is TREEIPHSVA…FLETWVKVKK (79 aa).

This sequence belongs to the TRAFAC class TrmE-Era-EngA-EngB-Septin-like GTPase superfamily. Era GTPase family. Monomer.

Its subcellular location is the cytoplasm. It localises to the cell membrane. An essential GTPase that binds both GDP and GTP, with rapid nucleotide exchange. Plays a role in 16S rRNA processing and 30S ribosomal subunit biogenesis and possibly also in cell cycle regulation and energy metabolism. This is GTPase Era from Streptococcus pneumoniae (strain P1031).